The primary structure comprises 824 residues: Silver exporting P-type ATPase (824 aa).

The segment at 89–112 (ASEHHHHHDHHEVSPDKIKQSHRQ) is disordered. Residues 98–112 (HHEVSPDKIKQSHRQ) show a composition bias toward basic and acidic residues. 6 consecutive transmembrane segments (helical) span residues 167–187 (FWLGLLLAFPVLILEMGSHLF), 200–220 (TWLQLLLASPVVLWCGWPFFA), 234–254 (FTLVAMGTGVAWVYSVIATVF), 268–288 (LVAIYFEAAAVITVLVLLGQV), 427–447 (WFVPLVILIAVVAFMIWSVWG), and 455–475 (GLIAAVSVLIIACPCALGLAT). Aspartate 511 (4-aspartylphosphate intermediate) is an active-site residue. 2 helical membrane passes run 764 to 784 (IRQNLFFAFIYNALGVPVAAG) and 785 to 805 (LLYPVYGILLSPVIAAAAMAL).

This sequence belongs to the cation transport ATPase (P-type) (TC 3.A.3) family. Type IB subfamily.

The protein localises to the cell membrane. The catalysed reaction is Ag(+)(in) + ATP + H2O = Ag(+)(out) + ADP + phosphate + H(+). Functionally, component of the sil cation-efflux system that confers resistance to silver. The polypeptide is Silver exporting P-type ATPase (silP) (Salmonella typhimurium).